We begin with the raw amino-acid sequence, 331 residues long: Ribosomal RNA small subunit methyltransferase C (331 aa).

The protein belongs to the methyltransferase superfamily. RsmC family. As to quaternary structure, monomer.

The protein resides in the cytoplasm. The enzyme catalyses guanosine(1207) in 16S rRNA + S-adenosyl-L-methionine = N(2)-methylguanosine(1207) in 16S rRNA + S-adenosyl-L-homocysteine + H(+). In terms of biological role, specifically methylates the guanine in position 1207 of 16S rRNA in the 30S particle. This Ectopseudomonas mendocina (strain ymp) (Pseudomonas mendocina) protein is Ribosomal RNA small subunit methyltransferase C.